The primary structure comprises 126 residues: Ribonuclease VapC23 (126 aa).

In terms of domain architecture, PINc spans 2 to 118 (IFVDTNVFMY…GVTRIKTFDH (117 aa)). The Mg(2+) site is built by Asp-5 and Asp-98.

This sequence belongs to the PINc/VapC protein family. It depends on Mg(2+) as a cofactor.

Its function is as follows. Toxic component of a type II toxin-antitoxin (TA) system. An RNase. The cognate antitoxin is VapB23. The chain is Ribonuclease VapC23 from Mycobacterium tuberculosis (strain CDC 1551 / Oshkosh).